A 401-amino-acid chain; its full sequence is 8-amino-7-oxononanoate synthase (401 aa).

Arginine 19 serves as a coordination point for substrate. 106-107 (GY) is a pyridoxal 5'-phosphate binding site. A substrate-binding site is contributed by histidine 131. Pyridoxal 5'-phosphate is bound by residues serine 176, histidine 204, and threonine 233. Lysine 236 carries the N6-(pyridoxal phosphate)lysine modification. Threonine 350 is a substrate binding site.

It belongs to the class-II pyridoxal-phosphate-dependent aminotransferase family. BioF subfamily. In terms of assembly, homodimer. Requires pyridoxal 5'-phosphate as cofactor.

The enzyme catalyses 6-carboxyhexanoyl-[ACP] + L-alanine + H(+) = (8S)-8-amino-7-oxononanoate + holo-[ACP] + CO2. Its pathway is cofactor biosynthesis; biotin biosynthesis. In terms of biological role, catalyzes the decarboxylative condensation of pimeloyl-[acyl-carrier protein] and L-alanine to produce 8-amino-7-oxononanoate (AON), [acyl-carrier protein], and carbon dioxide. The sequence is that of 8-amino-7-oxononanoate synthase from Pseudomonas paraeruginosa (strain DSM 24068 / PA7) (Pseudomonas aeruginosa (strain PA7)).